A 193-amino-acid chain; its full sequence is Potassium-transporting ATPase KdpC subunit (193 aa).

The chain crosses the membrane as a helical span at residues 14 to 34; the sequence is ITFTFLVLCGLVYPLIVTGIA.

This sequence belongs to the KdpC family. The system is composed of three essential subunits: KdpA, KdpB and KdpC.

The protein resides in the cell membrane. Its function is as follows. Part of the high-affinity ATP-driven potassium transport (or Kdp) system, which catalyzes the hydrolysis of ATP coupled with the electrogenic transport of potassium into the cytoplasm. This subunit acts as a catalytic chaperone that increases the ATP-binding affinity of the ATP-hydrolyzing subunit KdpB by the formation of a transient KdpB/KdpC/ATP ternary complex. The polypeptide is Potassium-transporting ATPase KdpC subunit (Bacillus cereus (strain ATCC 10987 / NRS 248)).